We begin with the raw amino-acid sequence, 902 residues long: Cytosolic 10-formyltetrahydrofolate dehydrogenase (902 aa).

The segment at 1–310 (MKIAVIGQSL…PASQYYKTAD (310 aa)) is hydrolase domain. (6R)-10-formyltetrahydrofolate is bound at residue 88 to 90 (QFI). H106 serves as the catalytic Proton donor. D142 is a (6R)-10-formyltetrahydrofolate binding site. In terms of domain architecture, Carrier spans 318-395 (DEEKKFSEEI…EFIQMVVRRL (78 aa)). S354 is modified (O-(pantetheine 4'-phosphoryl)serine). The interval 417–902 (TVKIPHQLFI…LKTKAVTIEY (486 aa)) is aldehyde dehydrogenase domain. Residues 571 to 573 (IPW), 597 to 600 (KPAQ), 630 to 635 (GSLIGQ), 650 to 651 (GS), and 673 to 674 (EL) each bind NADP(+). E673 serves as the catalytic Proton acceptor. The active-site Proton donor is the C707. Residues K757 and 804 to 806 (ESF) each bind NADP(+).

The protein in the N-terminal section; belongs to the GART family. In the C-terminal section; belongs to the aldehyde dehydrogenase family. ALDH1L subfamily. In terms of assembly, homotetramer. Post-translationally, phosphopantetheinylation at Ser-354 by AASDHPPT is required for the formyltetrahydrofolate dehydrogenase activity.

The protein localises to the cytoplasm. The protein resides in the cytosol. It carries out the reaction (6R)-10-formyltetrahydrofolate + NADP(+) + H2O = (6S)-5,6,7,8-tetrahydrofolate + CO2 + NADPH + H(+). Functionally, cytosolic 10-formyltetrahydrofolate dehydrogenase that catalyzes the NADP(+)-dependent conversion of 10-formyltetrahydrofolate to tetrahydrofolate and carbon dioxide. May also have an NADP(+)-dependent aldehyde dehydrogenase activity towards formaldehyde, acetaldehyde, propionaldehyde, and benzaldehyde. Regulates reduced folate pools as well as glycine metabolism. The protein is Cytosolic 10-formyltetrahydrofolate dehydrogenase (aldh1l1) of Xenopus tropicalis (Western clawed frog).